The primary structure comprises 571 residues: Sialate:O-sulfotransferase 2 (571 aa).

Over M1–V20 the chain is Cytoplasmic. A helical transmembrane segment spans residues R21–V43. At G44–R571 the chain is on the extracellular side. WSC domains lie at K133 to Q225 and S236 to Q330. N-linked (GlcNAc...) asparagine glycans are attached at residues N195 and N248.

The protein belongs to the WSCD family.

It is found in the golgi apparatus membrane. Sialate:O-sulfotransferase that catalyzes 8-O-sulfation at the Sia-glycan level using 3'-phosphoadenosine 5'-phosphosulfate (PAPS) as a donor, forming 8-O-sulfated Sia (Sia8S)-glycans. Displays selectivity toward glycoproteins such as TF/transferrin. The polypeptide is Sialate:O-sulfotransferase 2 (Wscd2) (Mus musculus (Mouse)).